The primary structure comprises 490 residues: MSDVQVHQLYIHGRYVEATSGKTFNSINPANGEIIATLQQASEQDIEAAVKSAQQGQKIWAAMTAMERSRILRRAVDILRERNDELARLETLDTGKAYSETSTVDIVTGADVLEYYAGLATAIQGEQVPLRESSFFYTRREPLGVVAGIGAWNYPIQIALWKSAPALAAGNAMIFKPSETTPLTALKLAEIYTEAGLPDGVFNVVQGAGREIGQWLTEHPVIEKISFTGGVETGKKVMASAAGSTLKEVTMELGGKSPLIICEDADLNRAADIAVMANFFSSGQVCTNGTRVFVPKSRLADFEKAVVERVKRIRIGDPMAEDTNFGPLTSFPHMEKVLSFIESGKQQGAKVLIGGGRATEGELAKGAYVLPTVFSDCTDQMAIVQEEIFGPVMSILSYETEEEVIQRANDTTFGLAAGVVTQDISRAHRIIHQIEAGICWINTWGESPAEMPVGGYKQSGVGRENGLTTLGHYTRIKSIQVELGDYQSIF.

3 residues coordinate K(+): serine 26, isoleucine 27, and aspartate 93. 150 to 152 (GAW) serves as a coordination point for NAD(+). The Charge relay system role is filled by lysine 162. NAD(+)-binding positions include 176-179 (KPSE) and 230-233 (GVET). Leucine 246 is a K(+) binding site. Catalysis depends on glutamate 252, which acts as the Proton acceptor. Residues glycine 254, cysteine 286, and glutamate 387 each contribute to the NAD(+) site. Catalysis depends on cysteine 286, which acts as the Nucleophile. Cysteine 286 is subject to Cysteine sulfenic acid (-SOH). Residues lysine 457 and glycine 460 each contribute to the K(+) site. Glutamate 464 serves as the catalytic Charge relay system.

This sequence belongs to the aldehyde dehydrogenase family. In terms of assembly, dimer of dimers. K(+) serves as cofactor.

It catalyses the reaction betaine aldehyde + NAD(+) + H2O = glycine betaine + NADH + 2 H(+). Its pathway is amine and polyamine biosynthesis; betaine biosynthesis via choline pathway; betaine from betaine aldehyde: step 1/1. Involved in the biosynthesis of the osmoprotectant glycine betaine. Catalyzes the irreversible oxidation of betaine aldehyde to the corresponding acid. The chain is Betaine aldehyde dehydrogenase from Acinetobacter baumannii (strain ACICU).